The following is a 194-amino-acid chain: Early growth response protein 1 (194 aa).

3 consecutive C2H2-type zinc fingers follow at residues 1-18, 24-46, and 52-74; these read CDRR…IRIH, FQCR…IRTH, and FACD…TKIH.

Belongs to the EGR C2H2-type zinc-finger protein family.

Its subcellular location is the nucleus. It is found in the cytoplasm. Its function is as follows. Transcriptional regulator. Recognizes and binds to the DNA sequence 5'-GCG(T/G)GGGCG-3'(EGR-site) in the promoter region of target genes. Binds double-stranded target DNA, irrespective of the cytosine methylation status. Regulates the transcription of numerous target genes, and thereby plays an important role in regulating the response to growth factors, DNA damage, and ischemia. Plays a role in the regulation of cell survival, proliferation and cell death. Mediates responses to ischemia and hypoxia; regulates the expression of proteins that are involved in inflammatory processes. Plays a role in regulating the expression of circadian clock genes. The chain is Early growth response protein 1 (EGR1) from Gallus gallus (Chicken).